We begin with the raw amino-acid sequence, 128 residues long: Large ribosomal subunit protein bL19 (128 aa).

This sequence belongs to the bacterial ribosomal protein bL19 family.

Functionally, this protein is located at the 30S-50S ribosomal subunit interface and may play a role in the structure and function of the aminoacyl-tRNA binding site. This Bradyrhizobium sp. (strain ORS 278) protein is Large ribosomal subunit protein bL19.